The sequence spans 398 residues: CCA-adding enzyme (398 aa).

ATP is bound by residues Gly32 and Arg35. Residues Gly32 and Arg35 each coordinate CTP. Mg(2+) is bound by residues Asp45 and Asp47. ATP contacts are provided by Arg116, Asp159, Arg162, Arg165, and Arg168. Positions 116, 159, 162, 165, and 168 each coordinate CTP.

It belongs to the tRNA nucleotidyltransferase/poly(A) polymerase family. Bacterial CCA-adding enzyme type 3 subfamily. As to quaternary structure, homodimer. Mg(2+) is required as a cofactor.

It catalyses the reaction a tRNA precursor + 2 CTP + ATP = a tRNA with a 3' CCA end + 3 diphosphate. The enzyme catalyses a tRNA with a 3' CCA end + 2 CTP + ATP = a tRNA with a 3' CCACCA end + 3 diphosphate. In terms of biological role, catalyzes the addition and repair of the essential 3'-terminal CCA sequence in tRNAs without using a nucleic acid template. Adds these three nucleotides in the order of C, C, and A to the tRNA nucleotide-73, using CTP and ATP as substrates and producing inorganic pyrophosphate. tRNA 3'-terminal CCA addition is required both for tRNA processing and repair. Also involved in tRNA surveillance by mediating tandem CCA addition to generate a CCACCA at the 3' terminus of unstable tRNAs. While stable tRNAs receive only 3'-terminal CCA, unstable tRNAs are marked with CCACCA and rapidly degraded. This is CCA-adding enzyme from Lactobacillus gasseri (strain ATCC 33323 / DSM 20243 / BCRC 14619 / CIP 102991 / JCM 1131 / KCTC 3163 / NCIMB 11718 / NCTC 13722 / AM63).